The following is a 1221-amino-acid chain: Putative DNA-directed RNA polymerase II subunit RPB2 homolog (1221 aa).

Composition is skewed to low complexity over residues 1–54 (MSRG…SASS) and 692–701 (PAPSSSPSDS). 2 disordered regions span residues 1–63 (MSRG…PMSE) and 673–701 (RGSGYDSPPAPEERDIEMDPAPSSSPSDS). A Mg(2+)-binding site is contributed by Asp-823. Zn(2+)-binding residues include Cys-1174, Cys-1177, Cys-1187, and Cys-1190. The segment at 1174–1190 (CKECGRISDHFEYCRMC) adopts a C4-type zinc-finger fold.

Belongs to the RNA polymerase beta chain family.

The catalysed reaction is RNA(n) + a ribonucleoside 5'-triphosphate = RNA(n+1) + diphosphate. Its function is as follows. Component of the DNA-dependent RNA polymerase that catalyzes the transcription of DNA into RNA using the four ribonucleoside triphosphates as substrates. Second largest component of RNA polymerase II which synthesizes mRNA precursors and many functional non-coding RNAs. Proposed to contribute to the polymerase catalytic activity and forms the polymerase active center together with the largest subunit. In Dryophytes versicolor (chameleon treefrog), this protein is Putative DNA-directed RNA polymerase II subunit RPB2 homolog.